The chain runs to 263 residues: Small ribosomal subunit protein eS4 (263 aa).

The region spanning 42–104 (LPLVIFLRNR…TNELFRLIYD (63 aa)) is the S4 RNA-binding domain.

It belongs to the eukaryotic ribosomal protein eS4 family.

This is Small ribosomal subunit protein eS4 (RpS4) from Spodoptera frugiperda (Fall armyworm).